Reading from the N-terminus, the 517-residue chain is Acetylcholine receptor subunit delta (517 aa).

The signal sequence occupies residues 1-21 (MAGPVPTLGLLAALVVCGSWG). The Extracellular segment spans residues 22 to 245 (LNEEQRLIQH…VTFYLIIRRK (224 aa)). Residues Asn-97, Asn-164, and Asn-190 are each glycosylated (N-linked (GlcNAc...) asparagine). A disulfide bridge connects residues Cys-151 and Cys-165. A run of 3 helical transmembrane segments spans residues 246-270 (PLFYIINILVPCVLISFMINLVFYL), 278-296 (TSVAISVLLAQSVFLLLIS), and 312-333 (FLLFGMVLVTMVVVICVIVLNI). Topologically, residues 334-471 (HFRTPSTHVL…WNQVARTVDR (138 aa)) are cytoplasmic. Tyr-390 is modified (phosphotyrosine; by Tyr-kinases). A helical transmembrane segment spans residues 472–490 (LCLFVVTPVMVVGTAWIFL).

The protein belongs to the ligand-gated ion channel (TC 1.A.9) family. Acetylcholine receptor (TC 1.A.9.1) subfamily. Delta/CHRND sub-subfamily. In terms of assembly, pentamer of two alpha chains, and one each of the beta, delta, and gamma (in immature muscle) or epsilon (in mature muscle) chains. The muscle heteropentamer composed of alpha-1, beta-1, delta, epsilon subunits interacts with the alpha-conotoxin ImII.

Its subcellular location is the postsynaptic cell membrane. It is found in the cell membrane. The catalysed reaction is K(+)(in) = K(+)(out). The enzyme catalyses Na(+)(in) = Na(+)(out). In terms of biological role, after binding acetylcholine, the AChR responds by an extensive change in conformation that affects all subunits and leads to opening of an ion-conducting channel across the plasma membrane. The sequence is that of Acetylcholine receptor subunit delta (Chrnd) from Rattus norvegicus (Rat).